Consider the following 107-residue polypeptide: MAQNKLHVKKGDMVVVISGKDKGKKGRVLQAFPKEGKVIVEGVNVVTKHRKATRPQKPGGIIHQEAPIHSSKVMLYCENCGRGVRYGIKILENGEKVRYCKRCNETL.

The protein belongs to the universal ribosomal protein uL24 family. In terms of assembly, part of the 50S ribosomal subunit.

In terms of biological role, one of two assembly initiator proteins, it binds directly to the 5'-end of the 23S rRNA, where it nucleates assembly of the 50S subunit. One of the proteins that surrounds the polypeptide exit tunnel on the outside of the subunit. This is Large ribosomal subunit protein uL24 from Caldanaerobacter subterraneus subsp. tengcongensis (strain DSM 15242 / JCM 11007 / NBRC 100824 / MB4) (Thermoanaerobacter tengcongensis).